The sequence spans 211 residues: 3-demethoxyubiquinol 3-hydroxylase (211 aa).

Positions 60, 90, 93, 142, 174, and 177 each coordinate Fe cation.

Belongs to the COQ7 family. The cofactor is Fe cation.

The protein localises to the cell membrane. It catalyses the reaction a 5-methoxy-2-methyl-3-(all-trans-polyprenyl)benzene-1,4-diol + AH2 + O2 = a 3-demethylubiquinol + A + H2O. It participates in cofactor biosynthesis; ubiquinone biosynthesis. Its function is as follows. Catalyzes the hydroxylation of 2-nonaprenyl-3-methyl-6-methoxy-1,4-benzoquinol during ubiquinone biosynthesis. This chain is 3-demethoxyubiquinol 3-hydroxylase, found in Acinetobacter baylyi (strain ATCC 33305 / BD413 / ADP1).